The following is a 327-amino-acid chain: Immunodominant envelope protein p35 (327 aa).

A disordered region spans residues 41–69; sequence KNGYDDYRDPPSPKPLPKSKQEPNADDKV. Positions 59-69 are enriched in basic and acidic residues; it reads SKQEPNADDKV. Residues 291 to 311 traverse the membrane as a helical segment; sequence ITMMFLIAIVIIIGLAIFDIN.

Belongs to the poxviruses protein p35 family.

It localises to the virion membrane. Functionally, envelope protein that binds to the cell surface to provide virion attachment to target cell. This Fowlpox virus (strain NVSL) (FPV) protein is Immunodominant envelope protein p35.